Here is a 253-residue protein sequence, read N- to C-terminus: 5'-nucleotidase SurE (253 aa).

A divalent metal cation is bound by residues Asp8, Asp9, Ser39, and Asn92.

Belongs to the SurE nucleotidase family. Requires a divalent metal cation as cofactor.

Its subcellular location is the cytoplasm. The enzyme catalyses a ribonucleoside 5'-phosphate + H2O = a ribonucleoside + phosphate. Its function is as follows. Nucleotidase that shows phosphatase activity on nucleoside 5'-monophosphates. In Burkholderia pseudomallei (strain 668), this protein is 5'-nucleotidase SurE.